The sequence spans 565 residues: Proline--tRNA ligase (565 aa).

This sequence belongs to the class-II aminoacyl-tRNA synthetase family. ProS type 1 subfamily. In terms of assembly, homodimer.

The protein resides in the cytoplasm. The enzyme catalyses tRNA(Pro) + L-proline + ATP = L-prolyl-tRNA(Pro) + AMP + diphosphate. Functionally, catalyzes the attachment of proline to tRNA(Pro) in a two-step reaction: proline is first activated by ATP to form Pro-AMP and then transferred to the acceptor end of tRNA(Pro). As ProRS can inadvertently accommodate and process non-cognate amino acids such as alanine and cysteine, to avoid such errors it has two additional distinct editing activities against alanine. One activity is designated as 'pretransfer' editing and involves the tRNA(Pro)-independent hydrolysis of activated Ala-AMP. The other activity is designated 'posttransfer' editing and involves deacylation of mischarged Ala-tRNA(Pro). The misacylated Cys-tRNA(Pro) is not edited by ProRS. The polypeptide is Proline--tRNA ligase (Francisella philomiragia subsp. philomiragia (strain ATCC 25017 / CCUG 19701 / FSC 153 / O#319-036)).